A 233-amino-acid polypeptide reads, in one-letter code: Small ribosomal subunit protein uS2c (233 aa).

Belongs to the universal ribosomal protein uS2 family.

Its subcellular location is the plastid. The protein localises to the apicoplast. The sequence is that of Small ribosomal subunit protein uS2c from Toxoplasma gondii.